The chain runs to 391 residues: Na(+)/H(+) antiporter NhaA 1 (391 aa).

11 helical membrane-spanning segments follow: residues 19-39 (FLAS…AALI), 56-76 (VWLG…IFFL), 98-118 (ALPG…YIAI), 128-148 (GWAI…SLLG), 157-177 (VFLA…IAFF), 180-200 (SGLN…LIAL), 208-228 (LLPY…SGVH), 264-284 (VAFA…LSGI), 297-317 (VALG…VLAI), 335-355 (GVAI…NLAF), and 364-384 (EVKV…ILLL).

It belongs to the NhaA Na(+)/H(+) (TC 2.A.33) antiporter family.

It localises to the cell inner membrane. The catalysed reaction is Na(+)(in) + 2 H(+)(out) = Na(+)(out) + 2 H(+)(in). Its function is as follows. Na(+)/H(+) antiporter that extrudes sodium in exchange for external protons. This is Na(+)/H(+) antiporter NhaA 1 from Pseudomonas savastanoi pv. phaseolicola (strain 1448A / Race 6) (Pseudomonas syringae pv. phaseolicola (strain 1448A / Race 6)).